We begin with the raw amino-acid sequence, 502 residues long: Probable cytochrome P450 313b1 (502 aa).

C449 is a heme binding site.

It belongs to the cytochrome P450 family. Heme serves as cofactor.

The protein localises to the endoplasmic reticulum membrane. It localises to the microsome membrane. May be involved in the metabolism of insect hormones and in the breakdown of synthetic insecticides. This Drosophila melanogaster (Fruit fly) protein is Probable cytochrome P450 313b1 (Cyp313b1).